The following is a 314-amino-acid chain: tRNA pseudouridine synthase B (314 aa).

H43 contributes to the substrate binding site. The active-site Nucleophile is the D48. The substrate site is built by Y76, Y179, and L200.

Belongs to the pseudouridine synthase TruB family. Type 1 subfamily.

The enzyme catalyses uridine(55) in tRNA = pseudouridine(55) in tRNA. In terms of biological role, responsible for synthesis of pseudouridine from uracil-55 in the psi GC loop of transfer RNAs. This Escherichia coli O157:H7 protein is tRNA pseudouridine synthase B.